A 302-amino-acid chain; its full sequence is tRNA dimethylallyltransferase (302 aa).

10-17 (GPTATGKS) contacts ATP. A substrate-binding site is contributed by 12 to 17 (TATGKS). Residues 35-38 (DSRQ) form an interaction with substrate tRNA region.

The protein belongs to the IPP transferase family. As to quaternary structure, monomer. Mg(2+) serves as cofactor.

The catalysed reaction is adenosine(37) in tRNA + dimethylallyl diphosphate = N(6)-dimethylallyladenosine(37) in tRNA + diphosphate. In terms of biological role, catalyzes the transfer of a dimethylallyl group onto the adenine at position 37 in tRNAs that read codons beginning with uridine, leading to the formation of N6-(dimethylallyl)adenosine (i(6)A). In Acaryochloris marina (strain MBIC 11017), this protein is tRNA dimethylallyltransferase.